We begin with the raw amino-acid sequence, 467 residues long: Uronate isomerase (467 aa).

Belongs to the metallo-dependent hydrolases superfamily. Uronate isomerase family.

The catalysed reaction is D-glucuronate = D-fructuronate. It carries out the reaction aldehydo-D-galacturonate = keto-D-tagaturonate. It functions in the pathway carbohydrate metabolism; pentose and glucuronate interconversion. The sequence is that of Uronate isomerase from Haemophilus influenzae (strain PittGG).